Reading from the N-terminus, the 345-residue chain is Heat-inducible transcription repressor HrcA (345 aa).

The protein belongs to the HrcA family.

In terms of biological role, negative regulator of class I heat shock genes (grpE-dnaK-dnaJ and groELS operons). Prevents heat-shock induction of these operons. The chain is Heat-inducible transcription repressor HrcA from Zymomonas mobilis subsp. mobilis (strain ATCC 31821 / ZM4 / CP4).